We begin with the raw amino-acid sequence, 280 residues long: MSALNLTVRVHPVVLFQVVDAYERRNADSHRVIGTLLGSVDKGVVEVTNCFCVPHKEHDDQVEAELSYALDMYDLNRKVNPNESVVGWWATGNDVTNHSSVIHEYYARECNNPVHLTVDTSLQGGRMGLRAYVCIQLGVPGGKSGCMFTPIPVELTSYEPETFGLKLLQKTVGVSPAHRPKTVPPMLDLAQISEASQKLQQLLDLILKYVDDVIAHKVTPDNAVGRQLLDLIHSVPHMTHEQFTQMFNANVRNLLLVITLSQLIKTQLQLNEKLTFLPSA.

The region spanning 8 to 138 (VRVHPVVLFQ…LRAYVCIQLG (131 aa)) is the MPN domain.

The protein belongs to the eIF-3 subunit F family. Component of the eukaryotic translation initiation factor 3 (eIF-3) complex. The eIF-3 complex interacts with pix.

Its subcellular location is the cytoplasm. Its function is as follows. Component of the eukaryotic translation initiation factor 3 (eIF-3) complex, which is involved in protein synthesis of a specialized repertoire of mRNAs and, together with other initiation factors, stimulates binding of mRNA and methionyl-tRNAi to the 40S ribosome. The eIF-3 complex specifically targets and initiates translation of a subset of mRNAs involved in cell proliferation. The polypeptide is Eukaryotic translation initiation factor 3 subunit F-1 (Drosophila ananassae (Fruit fly)).